Reading from the N-terminus, the 428-residue chain is MGNRHGIMRPRRLASGRSAAAAEEEGEDGEGEPGSYEAACSADPELGTFDTALRRRASRAITAVASGVEVRSLSLGSLREVTGCLLDMNQEVVRVVLACKRDVWRSPDLFDLVEDYFEGSLHTLDFLAALDKSLHRARDSQLVLHLAVQRHHHEPPAAAAASASELYASTLGELRQFKAAGEPFTDEFFAAFQTVYRQQMSMVGKLRRRKRRLDRRLRSVRVWRRVSGIVFLTAFAALLVCSVVAAAIAAPPVAAALAPAASMPVGSAGKWMDSLLKKYQDALHGHKEVVSAMQVGTFIAIKDLDSIRVLVEHLEVQISSMADSVEFAERDEEAVRFGIDEVKKKLELFMKSVDDLGEQADRNNMRLCHILPEYVFFINPANGNGMSESLFEMMNAFHDICRKDIKFKTSHYYLNFLSSSYQVYIAVA.

Basic residues predominate over residues 1 to 14; sequence MGNRHGIMRPRRLA. The segment at 1-40 is disordered; it reads MGNRHGIMRPRRLASGRSAAAAEEEGEDGEGEPGSYEAAC. Over residues 22–31 the composition is skewed to acidic residues; sequence AEEEGEDGEG. 2 helical membrane passes run 229–249 and 252–272; these read IVFL…AAIA and PVAA…GKWM.

The protein belongs to the UPF0496 family.

It is found in the membrane. The sequence is that of Putative UPF0496 protein 5 from Oryza sativa subsp. indica (Rice).